Reading from the N-terminus, the 833-residue chain is Neurogenic locus protein delta (833 aa).

Positions 1–18 (MHWIKCLLTAFICFTVIV) are cleaved as a signal peptide. Topologically, residues 19–594 (QVHSSGSFEL…ARADGLTNAQ (576 aa)) are extracellular. Intrachain disulfides connect C46–C61 and C68–C82. N98, N137, and N167 each carry an N-linked (GlcNAc...) asparagine glycan. The 45-residue stretch at 182–226 (VTCDLNYYGSGCAKFCRPRDDSFGHSTCSETGEIICLTGWQGDYC) folds into the DSL domain. Cystine bridges form between C184/C193, C197/C209, C217/C226, C231/C240, C235/C246, C248/C257, C260/C271, C266/C277, C279/C288, C295/C307, C301/C317, C319/C328, C335/C348, C342/C360, C362/C371, C378/C388, C383/C404, C406/C415, C422/C433, C427/C439, C441/C450, C457/C468, C462/C477, C479/C488, C495/C506, C500/C515, C517/C526, C533/C544, C538/C553, and C555/C564. 6 consecutive EGF-like domains span residues 227–258 (HIPK…ALCN), 256–289 (LCNE…LYCN), 291–329 (DLNY…DDCE), 331–372 (EIYS…KMCE), 374–416 (KVLT…PNCD), and 418–451 (QLDN…TRCE). The EGF-like 7; calcium-binding domain maps to 453-489 (NIDDCLGHQCENGGTCIDMVNQYRCQCVPGFHGTHCS). An EGF-like 8 domain is found at 491–527 (KVDLCLIRPCANGGTCLNLNNDYQCTCRAGFTGKDCS). The region spanning 529–565 (DIDECSSGPCHNGGTCMNRVNSFECVCANGFRGKQCD) is the EGF-like 9; calcium-binding domain. The chain crosses the membrane as a helical span at residues 595–617 (VVLIAVFSVAMPLVAVIAACVVF). The Cytoplasmic portion of the chain corresponds to 618–833 (CMKRKRKRAQ…RSVVCGTPHM (216 aa)). The residue at position 666 (T666) is a Phosphothreonine. Residues 743–773 (QLNTDPTLMHRGSPAGSSAKGASGGGPGAAE) are disordered. The span at 754-763 (GSPAGSSAKG) shows a compositional bias: low complexity.

In terms of assembly, interacts with Notch (N) via the EGF repeats and the N EGF repeats. Ubiquitinated by Mib, leading to its endocytosis and subsequent degradation. Detected in all areas with neurogenic abilities, for example the neurogenic ectoderm and the primordia of the sense organs. Later expression is restricted to those cells that have adopted a neural fate.

It is found in the membrane. Functionally, acts as a ligand for Notch (N) receptor. Essential for proper differentiation of ectoderm. Delta is required for the correct separation of neural and epidermal cell lineages. Fringe (fng) acts in the Golgi to determine the type of O-linked fucose on the EGF modules in N, altering the ability of N to bind with Delta. O-fut1 also has a role in modulating the interaction. This chain is Neurogenic locus protein delta, found in Drosophila melanogaster (Fruit fly).